The primary structure comprises 605 residues: Elongation factor 4 (605 aa).

Residues 10 to 192 (KNIRNFAIVA…AIVMRLPPPH (183 aa)) enclose the tr-type G domain. GTP-binding positions include 22 to 27 (DHGKST) and 139 to 142 (NKVD).

The protein belongs to the TRAFAC class translation factor GTPase superfamily. Classic translation factor GTPase family. LepA subfamily.

Its subcellular location is the cell inner membrane. It catalyses the reaction GTP + H2O = GDP + phosphate + H(+). Functionally, required for accurate and efficient protein synthesis under certain stress conditions. May act as a fidelity factor of the translation reaction, by catalyzing a one-codon backward translocation of tRNAs on improperly translocated ribosomes. Back-translocation proceeds from a post-translocation (POST) complex to a pre-translocation (PRE) complex, thus giving elongation factor G a second chance to translocate the tRNAs correctly. Binds to ribosomes in a GTP-dependent manner. This chain is Elongation factor 4, found in Chelativorans sp. (strain BNC1).